A 236-amino-acid polypeptide reads, in one-letter code: Aspartate/glutamate leucyltransferase (236 aa).

This sequence belongs to the R-transferase family. Bpt subfamily.

It localises to the cytoplasm. It carries out the reaction N-terminal L-glutamyl-[protein] + L-leucyl-tRNA(Leu) = N-terminal L-leucyl-L-glutamyl-[protein] + tRNA(Leu) + H(+). It catalyses the reaction N-terminal L-aspartyl-[protein] + L-leucyl-tRNA(Leu) = N-terminal L-leucyl-L-aspartyl-[protein] + tRNA(Leu) + H(+). Functions in the N-end rule pathway of protein degradation where it conjugates Leu from its aminoacyl-tRNA to the N-termini of proteins containing an N-terminal aspartate or glutamate. The polypeptide is Aspartate/glutamate leucyltransferase (Saccharophagus degradans (strain 2-40 / ATCC 43961 / DSM 17024)).